Here is a 298-residue protein sequence, read N- to C-terminus: Small ribosomal subunit protein uS3m (298 aa).

This sequence belongs to the universal ribosomal protein uS3 family.

It localises to the mitochondrion. This is Small ribosomal subunit protein uS3m (RPS3) from Acanthamoeba castellanii (Amoeba).